Consider the following 345-residue polypeptide: Protein RecA (345 aa).

81 to 88 provides a ligand contact to ATP; it reads GPESSGKT.

The protein belongs to the RecA family.

Its subcellular location is the cytoplasm. In terms of biological role, can catalyze the hydrolysis of ATP in the presence of single-stranded DNA, the ATP-dependent uptake of single-stranded DNA by duplex DNA, and the ATP-dependent hybridization of homologous single-stranded DNAs. It interacts with LexA causing its activation and leading to its autocatalytic cleavage. This Mycoplasma mycoides protein is Protein RecA.